The primary structure comprises 33 residues: Cytochrome b6-f complex subunit 8 (33 aa).

The helical transmembrane segment at 2–22 (IFQIGWAALAAIFTFSIAMVV) threads the bilayer.

The protein belongs to the PetN family. The 4 large subunits of the cytochrome b6-f complex are cytochrome b6, subunit IV (17 kDa polypeptide, PetD), cytochrome f and the Rieske protein, while the 4 small subunits are PetG, PetL, PetM and PetN. The complex functions as a dimer.

The protein localises to the cellular thylakoid membrane. Its function is as follows. Component of the cytochrome b6-f complex, which mediates electron transfer between photosystem II (PSII) and photosystem I (PSI), cyclic electron flow around PSI, and state transitions. The sequence is that of Cytochrome b6-f complex subunit 8 from Prochlorococcus marinus (strain MIT 9301).